The primary structure comprises 133 residues: MSMSDPIGDMLTRIRNAGRAKHETCLVPGSKIKKSILDLMKEEGFIKDYESVKVNETFEDYKVFLKYDHTKRPIIRELVRVSTPGRRVYIKSAEIRPYKNNIGTLIVSTSKGIMTGKNARKLKLGGEVILKMS.

It belongs to the universal ribosomal protein uS8 family. As to quaternary structure, part of the 30S ribosomal subunit. Contacts proteins S5 and S12.

One of the primary rRNA binding proteins, it binds directly to 16S rRNA central domain where it helps coordinate assembly of the platform of the 30S subunit. In Leptospira interrogans serogroup Icterohaemorrhagiae serovar copenhageni (strain Fiocruz L1-130), this protein is Small ribosomal subunit protein uS8.